The chain runs to 545 residues: uncharacterized protein (545 aa).

Residues 1–10 show a composition bias toward basic residues; it reads MSRYRFRKAR. Residues 1–25 form a disordered region; sequence MSRYRFRKARSNWPMGQNDSRWEPP. 2 WD repeats span residues 417–456 and 460–501; these read ACNTTFVRVLEKTRPECVVTEGFDSIIRIWDFRWPKNPMM and GHSN…MLCS.

This is an uncharacterized protein from Caenorhabditis elegans.